Consider the following 270-residue polypeptide: Imidazoleglycerol-phosphate dehydratase 1, chloroplastic (270 aa).

The transit peptide at 1–62 (MELSSASAIL…QSQLRQSISC (62 aa)) directs the protein to the chloroplast. Serine 63 carries the N-acetylserine modification. Substrate-binding positions include glutamate 84, 110-118 (HMLDQLASH), 136-140 (HHTNE), arginine 162, and arginine 184. Histidine 110, histidine 136, histidine 137, and glutamate 140 together coordinate Mn(2+). The Mn(2+) site is built by histidine 208, histidine 232, histidine 233, and glutamate 236. Residues 232–240 (HHIIEATFK) and 262–264 (SSK) contribute to the substrate site. The tract at residues 250-270 (TETDPRRGGTIPSSKGVLSRS) is disordered.

Belongs to the imidazoleglycerol-phosphate dehydratase family. It depends on Mn(2+) as a cofactor.

Its subcellular location is the plastid. It localises to the chloroplast. It catalyses the reaction D-erythro-1-(imidazol-4-yl)glycerol 3-phosphate = 3-(imidazol-4-yl)-2-oxopropyl phosphate + H2O. Its pathway is amino-acid biosynthesis; L-histidine biosynthesis; L-histidine from 5-phospho-alpha-D-ribose 1-diphosphate: step 6/9. This is Imidazoleglycerol-phosphate dehydratase 1, chloroplastic from Arabidopsis thaliana (Mouse-ear cress).